The chain runs to 151 residues: UPF0208 membrane protein YfbV (151 aa).

At 1 to 45 the chain is on the cytoplasmic side; sequence MSTPDNRSVNFFSLFCRGQHYSKTWPLEKRLAPVFVENRVIKMTR. A helical membrane pass occupies residues 46 to 65; it reads YAIRFMPPIAVFTLCWQIAL. The Periplasmic segment spans residues 66 to 68; the sequence is GGQ. A helical membrane pass occupies residues 69–91; that stretch reads LGPAVATALFALSLPMQGLWWLG. Over 92-151 the chain is Cytoplasmic; that stretch reads KRSVTPLPPAILNWFYEVRGKLQESGQVLAPVEGKPDYQALADTLKRAFKQLDKTFLDDL.

It belongs to the UPF0208 family.

The protein resides in the cell inner membrane. This Escherichia coli O6:H1 (strain CFT073 / ATCC 700928 / UPEC) protein is UPF0208 membrane protein YfbV (yfbV).